A 688-amino-acid chain; its full sequence is Translation initiation factor IF-2 (688 aa).

A compositionally biased stretch (basic and acidic residues) spans 50–62 (LLSGKEKSEKTKE). Residues 50 to 95 (LLSGKEKSEKTKEEDDEIETTAKNPIKESINNKKSNKRDDKKEKVN) are disordered. A compositionally biased stretch (low complexity) spans 72 to 82 (KNPIKESINNK). Positions 86–95 (KRDDKKEKVN) are enriched in basic and acidic residues. In terms of domain architecture, tr-type G spans 187–354 (KRSPIITVMG…MILLSSEILE (168 aa)). The G1 stretch occupies residues 196-203 (GHVDHGKT). Position 196–203 (196–203 (GHVDHGKT)) interacts with GTP. Positions 221–225 (GITQH) are G2. Positions 242–245 (DTPG) are G3. Residues 242 to 246 (DTPGH) and 296 to 299 (NKID) contribute to the GTP site. The tract at residues 296 to 299 (NKID) is G4. Positions 332–334 (SAH) are G5.

This sequence belongs to the TRAFAC class translation factor GTPase superfamily. Classic translation factor GTPase family. IF-2 subfamily.

It is found in the cytoplasm. Functionally, one of the essential components for the initiation of protein synthesis. Protects formylmethionyl-tRNA from spontaneous hydrolysis and promotes its binding to the 30S ribosomal subunits. Also involved in the hydrolysis of GTP during the formation of the 70S ribosomal complex. The polypeptide is Translation initiation factor IF-2 (Clostridium botulinum (strain 657 / Type Ba4)).